The chain runs to 217 residues: Phosphoribosylformylglycinamidine synthase subunit PurQ (217 aa).

The Glutamine amidotransferase type-1 domain occupies 2–217 (NIGIIVFPGS…GKSILSTLLS (216 aa)). The active-site Nucleophile is the Cys-86. Active-site residues include His-194 and Glu-196.

As to quaternary structure, part of the FGAM synthase complex composed of 1 PurL, 1 PurQ and 2 PurS subunits.

Its subcellular location is the cytoplasm. It catalyses the reaction N(2)-formyl-N(1)-(5-phospho-beta-D-ribosyl)glycinamide + L-glutamine + ATP + H2O = 2-formamido-N(1)-(5-O-phospho-beta-D-ribosyl)acetamidine + L-glutamate + ADP + phosphate + H(+). The catalysed reaction is L-glutamine + H2O = L-glutamate + NH4(+). The protein operates within purine metabolism; IMP biosynthesis via de novo pathway; 5-amino-1-(5-phospho-D-ribosyl)imidazole from N(2)-formyl-N(1)-(5-phospho-D-ribosyl)glycinamide: step 1/2. Functionally, part of the phosphoribosylformylglycinamidine synthase complex involved in the purines biosynthetic pathway. Catalyzes the ATP-dependent conversion of formylglycinamide ribonucleotide (FGAR) and glutamine to yield formylglycinamidine ribonucleotide (FGAM) and glutamate. The FGAM synthase complex is composed of three subunits. PurQ produces an ammonia molecule by converting glutamine to glutamate. PurL transfers the ammonia molecule to FGAR to form FGAM in an ATP-dependent manner. PurS interacts with PurQ and PurL and is thought to assist in the transfer of the ammonia molecule from PurQ to PurL. This Prochlorococcus marinus (strain NATL2A) protein is Phosphoribosylformylglycinamidine synthase subunit PurQ.